A 246-amino-acid chain; its full sequence is 5'-nucleotidase SurE (246 aa).

Asp-8, Asp-9, Ser-39, and Asn-91 together coordinate a divalent metal cation.

It belongs to the SurE nucleotidase family. A divalent metal cation is required as a cofactor.

The protein localises to the cytoplasm. It catalyses the reaction a ribonucleoside 5'-phosphate + H2O = a ribonucleoside + phosphate. In terms of biological role, nucleotidase that shows phosphatase activity on nucleoside 5'-monophosphates. The sequence is that of 5'-nucleotidase SurE from Histophilus somni (strain 129Pt) (Haemophilus somnus).